Here is a 134-residue protein sequence, read N- to C-terminus: Large ribosomal subunit protein uL16c (134 aa).

It belongs to the universal ribosomal protein uL16 family. In terms of assembly, part of the 50S ribosomal subunit.

It is found in the plastid. The protein localises to the chloroplast. The polypeptide is Large ribosomal subunit protein uL16c (Gnetum parvifolium (Small-leaved jointfir)).